Consider the following 177-residue polypeptide: Large ribosomal subunit protein bL17 (177 aa).

Residues A136–E177 form a disordered region. The span at E138–E149 shows a compositional bias: acidic residues. A compositionally biased stretch (low complexity) spans A150–E164.

Belongs to the bacterial ribosomal protein bL17 family. As to quaternary structure, part of the 50S ribosomal subunit. Contacts protein L32.

The protein is Large ribosomal subunit protein bL17 of Bifidobacterium longum (strain NCC 2705).